We begin with the raw amino-acid sequence, 698 residues long: Transcription factor cwo (698 aa).

Residues 62-75 (QDPLSHRIIEKRRR) are basic motif; degenerate. The 56-residue stretch at 62–117 (QDPLSHRIIEKRRRDRMNSCLADLSRLIPPQYQRKGRGRIEKTEIIEMAIRHLKHL) folds into the bHLH domain. Residues 76 to 117 (DRMNSCLADLSRLIPPQYQRKGRGRIEKTEIIEMAIRHLKHL) form a helix-loop-helix motif region. The 32-residue stretch at 128-159 (YRSGYMDCMKEAAKFLYDVHMQDFCHRLLGRL) folds into the Orange domain. 2 disordered regions span residues 257-319 (SSPA…ASST) and 349-369 (STAPHHHHHHTDSSHHDFESS). Residues 280–318 (APPAADNVPSNSTGSGSAAACAGGNSNSSGSNSSNAASS) show a composition bias toward low complexity. Residues 359–369 (TDSSHHDFESS) show a composition bias toward basic and acidic residues.

Expressed in adult brain where it is detected in the dorsal lateral neurons, small and large ventral lateral neurons and dorsal neurons 1, 2 and 3 (at protein level). Expressed at constant levels in a 12 hour light / 12 hour day cycle (at protein level). Strongly expressed in pacemaker neurons. In adults, mRNA expression oscillates in a circadian manner with a peak at around 14 hour Zeitgeber time. mRNA levels oscillate in a rhythmic manner in both 12 hour light / 12 hour dark and constant dark conditions with a morning peak around the time of lights-on and an evening peak around the time of lights-off in light/dark conditions. During stage 8 of embryonic development, expressed in the anterior and posterior midgut primordia and expression in the gut continues throughout embryonic development. During germ band retraction, expression is initiated in many tissues in a prominent segmentally repeated pattern. Later, expression is ubiquitous but has higher levels in segmentally repeated clusters of cells. Expression is also found in cells of the amnioserosa, in the head region, in posterior spiracles and in tracheal trees.

The protein localises to the nucleus. Plays a role in the regulation of circadian rhythms. Transcriptional repressor which inhibits Clock-mediated transcriptional activation by binding to E boxes in the promoters of Clock target genes and repressing their transcription. E box binding activity is time-dependent with higher binding activity seen in the early morning (zeitgeber time 2) than early evening (zeitgeber time 14) and is dependent on the presence of the circadian protein per. It is likely that per binds to Clock-cycle heterodimers, reducing their affinity for E box binding and allowing cwo to bind instead. Negatively regulates its own expression. This chain is Transcription factor cwo, found in Drosophila melanogaster (Fruit fly).